The following is a 216-amino-acid chain: Regulator of G-protein signaling 19 (216 aa).

Positions 1–19 are enriched in basic and acidic residues; it reads MPTPHEAEKQHTGPEEADR. A disordered region spans residues 1–30; sequence MPTPHEAEKQHTGPEEADRPPSMSSHDAAP. Ser24 is modified (phosphoserine; by CK2). One can recognise an RGS domain in the interval 90–206; the sequence is SFDKLMHSPT…LTSPTYRSLL (117 aa). Ser97 is modified (phosphoserine). Ser151 is subject to Phosphoserine; by MAPK1 and MAPK3. Residues 207–216 are interaction with GIPC; that stretch reads LQGAPQSSEA.

Interacts with GIPC PDZ domain. Interacts with GNAO1. Fatty acylated. Heavily palmitoylated in the cysteine string motif. In terms of processing, phosphorylated, mainly on serine residues.

It localises to the membrane. Its function is as follows. Inhibits signal transduction by increasing the GTPase activity of G protein alpha subunits thereby driving them into their inactive GDP-bound form. Binds to G-alpha subfamily 1 members, predominantly to G(i)-alpha-3. Activity on G(z)-alpha is inhibited by phosphorylation and palmitoylation of the G-protein. The polypeptide is Regulator of G-protein signaling 19 (Rgs19) (Rattus norvegicus (Rat)).